The sequence spans 873 residues: Zinc fingers and homeoboxes protein 1 (873 aa).

Position 36 is a phosphothreonine (threonine 36). Residues 41-63 (AKAESVSSDEEVHGSVDSDNQQN) are disordered. Serine 45, serine 47, and serine 48 each carry phosphoserine. Residues 50-63 (EEVHGSVDSDNQQN) are compositionally biased toward basic and acidic residues. C2H2-type zinc fingers lie at residues 70-93 (YECK…DSEH) and 102-125 (YVCV…LKYH). Lysine 159 participates in a covalent cross-link: Glycyl lysine isopeptide (Lys-Gly) (interchain with G-Cter in SUMO2). Positions 198 to 247 (VHHNSAEGTSEEKENGVKASQEENAESVSSSALESNTSTSTINRVHPSPA) are disordered. Serine 202 is subject to Phosphoserine. The segment covering 223-238 (ESVSSSALESNTSTST) has biased composition (low complexity). The segment at 272–432 (NSNLLPKVLI…QTNVQKSQVP (161 aa)) is required for dimerization. Residues 272 to 564 (NSNLLPKVLI…SQQKQSWNPF (293 aa)) form a required for interaction with NFYA region. A DNA-binding region (homeobox 1) is located at residues 284–346 (NSIPTYNAAL…LKHGVSWTPE (63 aa)). The segment at 429–456 (SQVPAAQPATDTKPATAAVPSSPSVRPE) is disordered. Glycyl lysine isopeptide (Lys-Gly) (interchain with G-Cter in SUMO2) cross-links involve residues lysine 441 and lysine 485. Residues 464-526 (SFGIRAKKTK…YNQRNSKSNQ (63 aa)) constitute a DNA-binding region (homeobox 2). Disordered stretches follow at residues 541 to 568 (DSSD…PDFA), 627 to 668 (DEKI…CKKT), and 731 to 767 (SSSL…KRMN). The segment at residues 569 to 630 (PQKFKEKTAE…KTKALKDEKI (62 aa)) is a DNA-binding region (homeobox 3). Lysine 629 is covalently cross-linked (Glycyl lysine isopeptide (Lys-Gly) (interchain with G-Cter in SUMO2)). Position 648 is a phosphoserine (serine 648). A DNA-binding region (homeobox 4) is located at residues 660 to 722 (GTGKICKKTP…YAWKNGNLKW (63 aa)). Residues 734-768 (LNGLSSLRRRGRGRPKGRGRGRPRGRPRGGKRMNT) are required for nuclear localization. Residues 740-764 (LRRRGRGRPKGRGRGRPRGRPRGGK) are compositionally biased toward basic residues. Serine 774 carries the post-translational modification Phosphoserine. The segment at residues 777-832 (KFKTGTAILKDYYLKHKFLNEQDLDELVNRSHMGYEQVREWFAERQRRSELGIELF) is a DNA-binding region (homeobox 5). A disordered region spans residues 829–873 (IELFEENEEEDEVVDDQEEDEEETDDSDTWEPPRHVKRKLSKSDD). The segment covering 831-857 (LFEENEEEDEVVDDQEEDEEETDDSDT) has biased composition (acidic residues). Residues 831-873 (LFEENEEEDEVVDDQEEDEEETDDSDTWEPPRHVKRKLSKSDD) form a required for repressor activity region. Residues 863–873 (HVKRKLSKSDD) show a composition bias toward basic residues.

Belongs to the ZHX family. Forms homodimers. Heterodimer (via HD1 domain) with ZHX2 (via HD1 domain). Also forms a heterodimer with ZHX3 which is a prerequisite for repressor activity. Interacts with ATF7IP and NFYA. Interacts (via homeobox domains) with DNMT3B (via PWWP domain). As to expression, widely expressed with highest levels in brain.

The protein localises to the nucleus. Functionally, acts as a transcriptional repressor. Increases DNMT3B-mediated repressive transcriptional activity when DNMT3B is tethered to DNA. May link molecule between DNMT3B and other co-repressor proteins. The protein is Zinc fingers and homeoboxes protein 1 (Zhx1) of Mus musculus (Mouse).